Here is a 367-residue protein sequence, read N- to C-terminus: Uroporphyrinogen decarboxylase (367 aa).

Residue Met-1 is modified to N-acetylmethionine. Arg-37, Ala-39, Arg-41, Arg-50, Asp-86, Tyr-164, Ser-219, and His-339 together coordinate coproporphyrinogen I. Coproporphyrinogen III contacts are provided by Arg-37, Ala-39, and Arg-41. Residues Asp-86, Tyr-164, Ser-219, and His-339 each contribute to the coproporphyrinogen III site.

Belongs to the uroporphyrinogen decarboxylase family. As to quaternary structure, homodimer.

The protein localises to the cytoplasm. The protein resides in the cytosol. It catalyses the reaction uroporphyrinogen III + 4 H(+) = coproporphyrinogen III + 4 CO2. It carries out the reaction uroporphyrinogen I + 4 H(+) = coproporphyrinogen I + 4 CO2. It functions in the pathway porphyrin-containing compound metabolism; protoporphyrin-IX biosynthesis; coproporphyrinogen-III from 5-aminolevulinate: step 4/4. Functionally, catalyzes the sequential decarboxylation of the four acetate side chains of uroporphyrinogen to form coproporphyrinogen and participates in the fifth step in the heme biosynthetic pathway. Isomer I or isomer III of uroporphyrinogen may serve as substrate, but only coproporphyrinogen III can ultimately be converted to heme. In vitro also decarboxylates pentacarboxylate porphyrinogen I. In Pongo abelii (Sumatran orangutan), this protein is Uroporphyrinogen decarboxylase.